We begin with the raw amino-acid sequence, 399 residues long: Elongation factor Tu (399 aa).

One can recognise a tr-type G domain in the interval 10–209; sequence KPHVNIGTIG…EVDAYIPTPV (200 aa). A G1 region spans residues 19 to 26; it reads GHVDHGKT. Position 19-26 (19-26) interacts with GTP; the sequence is GHVDHGKT. Threonine 26 is a binding site for Mg(2+). The G2 stretch occupies residues 60–64; the sequence is GITIA. The G3 stretch occupies residues 81–84; the sequence is DCPG. Residues 81 to 85 and 136 to 139 each bind GTP; these read DCPGH and NKQD. Residues 136–139 form a G4 region; sequence NKQD. A G5 region spans residues 174 to 176; that stretch reads SAL.

This sequence belongs to the TRAFAC class translation factor GTPase superfamily. Classic translation factor GTPase family. EF-Tu/EF-1A subfamily. In terms of assembly, monomer.

Its subcellular location is the cytoplasm. The enzyme catalyses GTP + H2O = GDP + phosphate + H(+). Its function is as follows. GTP hydrolase that promotes the GTP-dependent binding of aminoacyl-tRNA to the A-site of ribosomes during protein biosynthesis. This is Elongation factor Tu from Helicobacter acinonychis (strain Sheeba).